The primary structure comprises 2610 residues: E3 ubiquitin-protein ligase HECTD1 (2610 aa).

The segment at 246 to 269 (TVSGPSSACKPGRSTTGAPSTTAD) is disordered. The segment covering 258-269 (RSTTGAPSTTAD) has biased composition (polar residues). 4 ANK repeats span residues 395-424 (VGQT…DVNR), 426-455 (QRSS…NPDL), 459-491 (DGKT…PVNK), and 579-612 (ITAT…DIFL). Positions 489–513 (VNKGDDKKKKDTNKDEEECNEPKGD) are disordered. The span at 491–501 (KGDDKKKKDTN) shows a compositional bias: basic and acidic residues. 2 disordered regions span residues 627 to 657 (LAGP…ELQQ) and 707 to 748 (SSGS…LSAP). Phosphoserine occurs at positions 631 and 640. Over residues 639–657 (ESKPEKEDEPQEDAKELQQ) the composition is skewed to basic and acidic residues. Low complexity predominate over residues 707–717 (SSGSPEGGSDS). Positions 718 to 729 (SESRSEFLEKLQ) are enriched in basic and acidic residues. The MIB/HERC2 domain occupies 1266-1338 (VRSQVLKYMV…KFDLKLAPGY (73 aa)). Disordered stretches follow at residues 1343–1406 (VASP…KTER) and 1433–1483 (ENVP…SMGI). Residues 1348 to 1365 (PVSSTVSGTTQSWSSLVK) are compositionally biased toward polar residues. Low complexity-rich tracts occupy residues 1373–1395 (SAAA…ASSS) and 1441–1458 (GSSS…TGSE). Phosphoserine is present on Ser-1384. Over residues 1469–1479 (SVRTPGESSAI) the composition is skewed to polar residues. Ser-1488 is subject to Phosphoserine. The disordered stretch occupies residues 1496-1515 (ELTNKEAASQRPLSSSASNR). The residue at position 1567 (Ser-1567) is a Phosphoserine. Disordered stretches follow at residues 1592–1611 (GAQS…VTMS) and 1674–1757 (ELDD…KGGR). Positions 1600 to 1611 (TTPGTTSTVTMS) are enriched in low complexity. Over residues 1674–1703 (ELDDDEDLPEPDEEDDENEDDNQEDQEYEE) the composition is skewed to acidic residues. A Phosphothreonine modification is found at Thr-1760. Ser-1772 carries the phosphoserine modification. The interval 1777–1797 (AFDPRPGRTNVQQTTDLEIPP) is disordered. Positions 2029–2103 (FTFPPDEFTS…AIVWLQNRRE (75 aa)) are K-box. An HECT domain is found at 2151–2610 (IHADRKSVLE…ATMEKGFHLN (460 aa)). A disordered region spans residues 2297–2318 (HCTESQSEASTEEGHDSLSVGS). Residue Ser-2318 is modified to Phosphoserine. Cys-2579 serves as the catalytic Glycyl thioester intermediate.

It belongs to the UPL family. K-HECT subfamily. As to quaternary structure, interacts with IGSF1.

It catalyses the reaction S-ubiquitinyl-[E2 ubiquitin-conjugating enzyme]-L-cysteine + [acceptor protein]-L-lysine = [E2 ubiquitin-conjugating enzyme]-L-cysteine + N(6)-ubiquitinyl-[acceptor protein]-L-lysine.. The protein operates within protein modification; protein ubiquitination. Functionally, E3 ubiquitin-protein ligase which accepts ubiquitin from an E2 ubiquitin-conjugating enzyme in the form of a thioester and then directly transfers the ubiquitin to targeted substrates. Mediates 'Lys-63'-linked polyubiquitination of HSP90AA1 which leads to its intracellular localization and reduced secretion. Negatively regulating HSP90AA1 secretion in cranial mesenchyme cells may impair their emigration and may be essential for the correct development of the cranial neural folds and neural tube closure. Catalyzes ubiquitination and degradation of ZNF622, an assembly factor for the ribosomal 60S subunit, in hematopoietic cells, thereby promoting hematopoietic stem cell renewal. This chain is E3 ubiquitin-protein ligase HECTD1, found in Homo sapiens (Human).